The chain runs to 182 residues: ATP synthase subunit delta (182 aa).

It belongs to the ATPase delta chain family. As to quaternary structure, F-type ATPases have 2 components, F(1) - the catalytic core - and F(0) - the membrane proton channel. F(1) has five subunits: alpha(3), beta(3), gamma(1), delta(1), epsilon(1). F(0) has three main subunits: a(1), b(2) and c(10-14). The alpha and beta chains form an alternating ring which encloses part of the gamma chain. F(1) is attached to F(0) by a central stalk formed by the gamma and epsilon chains, while a peripheral stalk is formed by the delta and b chains.

The protein localises to the cell membrane. Functionally, f(1)F(0) ATP synthase produces ATP from ADP in the presence of a proton or sodium gradient. F-type ATPases consist of two structural domains, F(1) containing the extramembraneous catalytic core and F(0) containing the membrane proton channel, linked together by a central stalk and a peripheral stalk. During catalysis, ATP synthesis in the catalytic domain of F(1) is coupled via a rotary mechanism of the central stalk subunits to proton translocation. Its function is as follows. This protein is part of the stalk that links CF(0) to CF(1). It either transmits conformational changes from CF(0) to CF(1) or is implicated in proton conduction. The chain is ATP synthase subunit delta from Syntrophomonas wolfei subsp. wolfei (strain DSM 2245B / Goettingen).